A 313-amino-acid polypeptide reads, in one-letter code: Apolipoprotein E (313 aa).

Positions 1-18 (MKVLWVALVITLLAGCQA) are cleaved as a signal peptide. Tandem repeats lie at residues 79–100 (VLMD…EQLG), 101–122 (PIAQ…ARLA), 123–144 (SDME…AVMG), 145–166 (QTTD…KRLL), 167–188 (RDAE…EGSE), 189–209 (RSVS…RGRA), 210–229 (GTLA…QKLR), and 230–251 (GRVE…EQLE). Residues 79-251 (VLMDETMKEV…HLEEIREQLE (173 aa)) form an 8 X 22 AA approximate tandem repeats region. An LDL and other lipoprotein receptors binding region spans residues 157-167 (HLRKLRKRLLR). 161–164 (LRKR) lines the heparin pocket. The lipid-binding and lipoprotein association stretch occupies residues 209–286 (AGTLASQTLR…SWFEPLVEDM (78 aa)). Position 225-232 (225-232 (HQKLRGRV)) interacts with heparin. Positions 262–313 (SQIRLQAEAFQARLKSWFEPLVEDMQRQWAGLVEKVQLAMATSSTSAPSENH) are homooligomerization. The specificity for association with VLDL stretch occupies residues 274–286 (RLKSWFEPLVEDM).

It belongs to the apolipoprotein A1/A4/E family. In terms of assembly, homotetramer. May interact with ABCA1; functionally associated with ABCA1 in the biogenesis of HDLs. May interact with APP/A4 amyloid-beta peptide; the interaction is extremely stable in vitro but its physiological significance is unclear. May interact with MAPT. May interact with MAP2. In the cerebrospinal fluid, interacts with secreted SORL1. Interacts with PMEL; this allows the loading of PMEL luminal fragment on ILVs to induce fibril nucleation. In terms of processing, APOE exists as multiple glycosylated and sialylated glycoforms within cells and in plasma. The extent of glycosylation and sialylation are tissue and context specific. Post-translationally, glycated in plasma VLDL. Phosphorylated by FAM20C in the extracellular medium.

It localises to the secreted. Its subcellular location is the extracellular space. It is found in the extracellular matrix. The protein resides in the extracellular vesicle. The protein localises to the endosome. It localises to the multivesicular body. APOE is an apolipoprotein, a protein associating with lipid particles, that mainly functions in lipoprotein-mediated lipid transport between organs via the plasma and interstitial fluids. APOE is a core component of plasma lipoproteins and is involved in their production, conversion and clearance. Apolipoproteins are amphipathic molecules that interact both with lipids of the lipoprotein particle core and the aqueous environment of the plasma. As such, APOE associates with chylomicrons, chylomicron remnants, very low density lipoproteins (VLDL) and intermediate density lipoproteins (IDL) but shows a preferential binding to high-density lipoproteins (HDL). It also binds a wide range of cellular receptors including the LDL receptor/LDLR and the very low-density lipoprotein receptor/VLDLR that mediate the cellular uptake of the APOE-containing lipoprotein particles. Finally, APOE also has a heparin-binding activity and binds heparan-sulfate proteoglycans on the surface of cells, a property that supports the capture and the receptor-mediated uptake of APOE-containing lipoproteins by cells. The polypeptide is Apolipoprotein E (APOE) (Balaenoptera acutorostrata scammoni (North Pacific minke whale)).